The chain runs to 178 residues: Caveolin-1 (178 aa).

Position 2 is an N-acetylserine (Ser-2). The residue at position 2 (Ser-2) is a Phosphoserine. Positions 2–94 are required for homooligomerization; that stretch reads SGGKYVDSEG…WKASFTTFTV (93 aa). At 2-104 the chain is on the cytoplasmic side; it reads SGGKYVDSEG…TKYWFYRLLS (103 aa). Lys-5 bears the N6-acetyllysine; alternate mark. Lys-5 participates in a covalent cross-link: Glycyl lysine isopeptide (Lys-Gly) (interchain with G-Cter in ubiquitin); alternate. A Phosphotyrosine modification is found at Tyr-6. Position 9 is a phosphoserine (Ser-9). A Phosphotyrosine; by ABL1 modification is found at Tyr-14. Position 25 is a phosphotyrosine (Tyr-25). Glycyl lysine isopeptide (Lys-Gly) (interchain with G-Cter in ubiquitin) cross-links involve residues Lys-26, Lys-30, Lys-39, Lys-47, and Lys-57. Residues 82 to 94 are interaction with CAVIN3; sequence DGIWKASFTTFTV. The segment at residues 105 to 125 is an intramembrane region (helical); it reads SLVGIPVALIWGIYFAILSFL. At 126-178 the chain is on the cytoplasmic side; that stretch reads YIWAVVPCIKSFLIKIQCISRIYSICIHTFCDPLYEAIGKIFSNIRISMQKEI. The tract at residues 131 to 142 is interacts with SPRY1, SPRY2, SPRY3 and SPRY4; it reads VPCIKSFLIKIQ. S-palmitoyl cysteine attachment occurs at residues Cys-133, Cys-143, and Cys-156. Residues 149–160 form an interacts with SPRY1, SPRY2, and SPRY4 region; that stretch reads SICIHTFCDPLY. The interval 167-178 is interacts with SPRY1, SPRY2, SPRY3 and SPRY4; the sequence is FSNIRISMQKEI.

It belongs to the caveolin family. Homooligomer. Interacts with GLIPR2. Interacts with NOSTRIN. Interacts with SNAP25 and STX1A. Interacts (via the N-terminus) with DPP4; the interaction is direct. Interacts with CTNNB1, CDH1 and JUP. Interacts with PACSIN2; this interaction induces membrane tubulation. Interacts with SLC7A9. Interacts with BMX and BTK. Interacts with TGFBR1. Interacts with CAVIN3 (via leucine-zipper domain) in a cholesterol-sensitive manner. Interacts with CAVIN1. Interacts with EHD2 in a cholesterol-dependent manner. Forms a ternary complex with UBXN6 and VCP; mediates CAV1 targeting to lysosomes for degradation. Interacts with ABCG1; this interaction regulates ABCG1-mediated cholesterol efflux. Interacts with NEU3; this interaction enhances NEU3 sialidase activity within caveola. Interacts (via C-terminus) with SPRY1, SPRY2 (via C-terminus), SPRY3, and SPRY4. Interacts with IGFBP5; this interaction allows trafficking of IGFBP5 from the plasma membrane to the nucleus. Post-translationally, phosphorylated at Tyr-14 by ABL1 in response to oxidative stress. In terms of processing, ubiquitinated. Undergo monoubiquitination and multi- and/or polyubiquitination. Monoubiquitination of N-terminal lysines promotes integration in a ternary complex with UBXN6 and VCP which promotes oligomeric CAV1 targeting to lysosomes for degradation. Ubiquitinated by ZNRF1; leading to degradation and modulation of the TLR4-mediated immune response.

The protein localises to the golgi apparatus membrane. It is found in the cell membrane. The protein resides in the membrane. It localises to the caveola. Its subcellular location is the membrane raft. Its function is as follows. May act as a scaffolding protein within caveolar membranes. Forms a stable heterooligomeric complex with CAV2 that targets to lipid rafts and drives caveolae formation. Mediates the recruitment of CAVIN proteins (CAVIN1/2/3/4) to the caveolae. Interacts directly with G-protein alpha subunits and can functionally regulate their activity. Involved in the costimulatory signal essential for T-cell receptor (TCR)-mediated T-cell activation. Its binding to DPP4 induces T-cell proliferation and NF-kappa-B activation in a T-cell receptor/CD3-dependent manner. Recruits CTNNB1 to caveolar membranes and may regulate CTNNB1-mediated signaling through the Wnt pathway. Negatively regulates TGFB1-mediated activation of SMAD2/3 by mediating the internalization of TGFBR1 from membrane rafts leading to its subsequent degradation. Binds 20(S)-hydroxycholesterol (20(S)-OHC). This Atelerix albiventris (Middle-African hedgehog) protein is Caveolin-1 (CAV1).